The chain runs to 368 residues: MHIYKVGGAVRDRLLGRPVSDIDWLVVGATVEEMLAKGYRPVGADFPVFLHPKTGEEYALARTERKSGRGYGGFTFHASPDVTLEEDLIRRDLTINAMAEDEAGTVYDPYQGKQDLDKRLLRHVSPAFAEDPLRVLRVARFAARYAPLGFRVADETLALMRQISASGELQALTAERSWKEIERALMEVQPQVFFKVLSACGALQELLPELDDSSRTLAALEQAAVHEQPLHVRWACLLRGLSPTSIKAVNQRLKAPRECQELAMLTGECLAQGNQALELPATALLELLQKFDVYRRPQRFEDFLVVCEMAARGDGEQGYPQADYLRRAAAAARAVDVKPLVQAGLTGQALGEALKGERLKALEAYQRG.

ATP contacts are provided by Gly8 and Arg11. 2 residues coordinate CTP: Gly8 and Arg11. Residues Asp21 and Asp23 each coordinate Mg(2+). Arg91, Arg137, and Arg140 together coordinate ATP. Residues Arg91, Arg137, and Arg140 each coordinate CTP.

The protein belongs to the tRNA nucleotidyltransferase/poly(A) polymerase family. Bacterial CCA-adding enzyme type 2 subfamily. It depends on Mg(2+) as a cofactor.

The catalysed reaction is a tRNA precursor + 2 CTP + ATP = a tRNA with a 3' CCA end + 3 diphosphate. It catalyses the reaction a tRNA with a 3' CCA end + 2 CTP + ATP = a tRNA with a 3' CCACCA end + 3 diphosphate. Functionally, catalyzes the addition and repair of the essential 3'-terminal CCA sequence in tRNAs without using a nucleic acid template. Adds these three nucleotides in the order of C, C, and A to the tRNA nucleotide-73, using CTP and ATP as substrates and producing inorganic pyrophosphate. tRNA 3'-terminal CCA addition is required both for tRNA processing and repair. Also involved in tRNA surveillance by mediating tandem CCA addition to generate a CCACCA at the 3' terminus of unstable tRNAs. While stable tRNAs receive only 3'-terminal CCA, unstable tRNAs are marked with CCACCA and rapidly degraded. This Pseudomonas putida (strain ATCC 700007 / DSM 6899 / JCM 31910 / BCRC 17059 / LMG 24140 / F1) protein is CCA-adding enzyme.